The chain runs to 151 residues: Ribonuclease H (151 aa).

The RNase H type-1 domain maps to 1 to 141 (MQEVTVYSDG…ADALANKGVE (141 aa)). Asp-9, Glu-47, Asp-69, and Asp-133 together coordinate Mg(2+).

The protein belongs to the RNase H family. In terms of assembly, monomer. Mg(2+) is required as a cofactor.

The protein localises to the cytoplasm. It catalyses the reaction Endonucleolytic cleavage to 5'-phosphomonoester.. Endonuclease that specifically degrades the RNA of RNA-DNA hybrids. This chain is Ribonuclease H, found in Ralstonia nicotianae (strain ATCC BAA-1114 / GMI1000) (Ralstonia solanacearum).